Reading from the N-terminus, the 478-residue chain is uncharacterized protein (478 aa).

The RRM domain maps to 5–85; it reads KRIYVGGLSS…SKLRIEEARP (81 aa). 2 positions are modified to phosphoserine: Ser-207 and Ser-308.

Its subcellular location is the nucleus. The protein localises to the nucleolus. This is an uncharacterized protein from Schizosaccharomyces pombe (strain 972 / ATCC 24843) (Fission yeast).